The sequence spans 359 residues: Popy class I histocompatibility antigen, alpha chain E (359 aa).

An N-terminal signal peptide occupies residues G1–A18. The segment at G19–A108 is alpha-1. Topologically, residues G19–I302 are extracellular. An N-linked (GlcNAc...) asparagine glycan is attached at N104. The segment at G109–L200 is alpha-2. 2 cysteine pairs are disulfide-bonded: C119-C182 and C221-C277. The segment at D201–W292 is alpha-3. One can recognise an Ig-like C1-type domain in the interval P203–R291. The connecting peptide stretch occupies residues E293–I302. The helical transmembrane segment at V303–M326 threads the bilayer. Residues W327–A359 lie on the Cytoplasmic side of the membrane. The tract at residues K330–A359 is disordered. Residues D346 to A359 show a composition bias toward polar residues. A Phosphoserine modification is found at S351.

Belongs to the MHC class I family. In terms of assembly, heterodimer of an alpha chain and a beta chain (beta-2-microglobulin).

It localises to the membrane. Its function is as follows. Involved in the presentation of foreign antigens to the immune system. The sequence is that of Popy class I histocompatibility antigen, alpha chain E (Popy-E) from Pongo pygmaeus (Bornean orangutan).